The chain runs to 110 residues: UPF0145 protein BLD_1357 (110 aa).

Belongs to the UPF0145 family.

This chain is UPF0145 protein BLD_1357, found in Bifidobacterium longum (strain DJO10A).